The primary structure comprises 507 residues: Maturase K (507 aa).

The protein belongs to the intron maturase 2 family. MatK subfamily.

The protein localises to the plastid. It is found in the chloroplast. Usually encoded in the trnK tRNA gene intron. Probably assists in splicing its own and other chloroplast group II introns. The polypeptide is Maturase K (Cananga odorata (Ylang-ylang tree)).